The chain runs to 394 residues: Elongation factor Tu 1 (394 aa).

A tr-type G domain is found at K10–E204. A G1 region spans residues G19 to T26. G19–T26 provides a ligand contact to GTP. Mg(2+) is bound at residue T26. The G2 stretch occupies residues G60–S64. A G3 region spans residues D81–G84. GTP-binding positions include D81–H85 and N136–D139. Residues N136–D139 form a G4 region. The segment at S174–L176 is G5.

It belongs to the TRAFAC class translation factor GTPase superfamily. Classic translation factor GTPase family. EF-Tu/EF-1A subfamily. Monomer.

The protein localises to the cytoplasm. The catalysed reaction is GTP + H2O = GDP + phosphate + H(+). In terms of biological role, GTP hydrolase that promotes the GTP-dependent binding of aminoacyl-tRNA to the A-site of ribosomes during protein biosynthesis. In Vibrio vulnificus (strain YJ016), this protein is Elongation factor Tu 1.